The chain runs to 385 residues: DnaJ homolog subfamily C member 28 (385 aa).

The 85-residue stretch at Glu-48–Gln-132 folds into the J domain. Residues Lys-261 to Val-318 adopt a coiled-coil conformation.

In terms of biological role, may have a role in protein folding or as a chaperone. The polypeptide is DnaJ homolog subfamily C member 28 (Dnajc28) (Mus musculus (Mouse)).